A 176-amino-acid polypeptide reads, in one-letter code: Large ribosomal subunit protein uL10 (176 aa).

It belongs to the universal ribosomal protein uL10 family. Part of the ribosomal stalk of the 50S ribosomal subunit. The N-terminus interacts with L11 and the large rRNA to form the base of the stalk. The C-terminus forms an elongated spine to which L12 dimers bind in a sequential fashion forming a multimeric L10(L12)X complex.

Functionally, forms part of the ribosomal stalk, playing a central role in the interaction of the ribosome with GTP-bound translation factors. In Leuconostoc citreum (strain KM20), this protein is Large ribosomal subunit protein uL10.